Reading from the N-terminus, the 604-residue chain is Putative JmjC domain-containing protein L887 (604 aa).

In terms of domain architecture, JmjC spans Met-1–Pro-127. The chain crosses the membrane as a helical span at residues Met-4–Ile-24.

It is found in the membrane. The protein is Putative JmjC domain-containing protein L887 of Acanthamoeba polyphaga (Amoeba).